Consider the following 507-residue polypeptide: UDP-N-acetylmuramoyl-L-alanyl-D-glutamate--2,6-diaminopimelate ligase (507 aa).

Residue serine 32 participates in UDP-N-acetyl-alpha-D-muramoyl-L-alanyl-D-glutamate binding. 117–123 contacts ATP; the sequence is GTNGKTT. Residues 159-160, serine 186, glutamine 192, and arginine 194 each bind UDP-N-acetyl-alpha-D-muramoyl-L-alanyl-D-glutamate; that span reads TT. At lysine 226 the chain carries N6-carboxylysine. Meso-2,6-diaminopimelate contacts are provided by residues arginine 400, 424–427, glycine 475, and glutamate 479; that span reads DNPR. The short motif at 424 to 427 is the Meso-diaminopimelate recognition motif element; the sequence is DNPR.

The protein belongs to the MurCDEF family. MurE subfamily. Mg(2+) is required as a cofactor. In terms of processing, carboxylation is probably crucial for Mg(2+) binding and, consequently, for the gamma-phosphate positioning of ATP.

The protein resides in the cytoplasm. It catalyses the reaction UDP-N-acetyl-alpha-D-muramoyl-L-alanyl-D-glutamate + meso-2,6-diaminopimelate + ATP = UDP-N-acetyl-alpha-D-muramoyl-L-alanyl-gamma-D-glutamyl-meso-2,6-diaminopimelate + ADP + phosphate + H(+). It functions in the pathway cell wall biogenesis; peptidoglycan biosynthesis. In terms of biological role, catalyzes the addition of meso-diaminopimelic acid to the nucleotide precursor UDP-N-acetylmuramoyl-L-alanyl-D-glutamate (UMAG) in the biosynthesis of bacterial cell-wall peptidoglycan. This Prochlorococcus marinus (strain MIT 9313) protein is UDP-N-acetylmuramoyl-L-alanyl-D-glutamate--2,6-diaminopimelate ligase.